Consider the following 177-residue polypeptide: Large ribosomal subunit protein uL6 (177 aa).

Belongs to the universal ribosomal protein uL6 family. As to quaternary structure, part of the 50S ribosomal subunit.

Its function is as follows. This protein binds to the 23S rRNA, and is important in its secondary structure. It is located near the subunit interface in the base of the L7/L12 stalk, and near the tRNA binding site of the peptidyltransferase center. This is Large ribosomal subunit protein uL6 from Cupriavidus necator (strain ATCC 17699 / DSM 428 / KCTC 22496 / NCIMB 10442 / H16 / Stanier 337) (Ralstonia eutropha).